Consider the following 456-residue polypeptide: Glutamyl-tRNA(Gln) amidotransferase subunit A (456 aa).

Active-site charge relay system residues include Lys-74 and Ser-149. Ser-173 serves as the catalytic Acyl-ester intermediate.

The protein belongs to the amidase family. GatA subfamily. As to quaternary structure, heterotrimer of A, B and C subunits.

It catalyses the reaction L-glutamyl-tRNA(Gln) + L-glutamine + ATP + H2O = L-glutaminyl-tRNA(Gln) + L-glutamate + ADP + phosphate + H(+). Functionally, allows the formation of correctly charged Gln-tRNA(Gln) through the transamidation of misacylated Glu-tRNA(Gln) in organisms which lack glutaminyl-tRNA synthetase. The reaction takes place in the presence of glutamine and ATP through an activated gamma-phospho-Glu-tRNA(Gln). The chain is Glutamyl-tRNA(Gln) amidotransferase subunit A from Methanobrevibacter smithii (strain ATCC 35061 / DSM 861 / OCM 144 / PS).